The sequence spans 406 residues: Cyclin-dependent kinase 4 homolog (406 aa).

Positions 102–388 (TFLFQALGKG…ARGALSHPFL (287 aa)) constitute a Protein kinase domain. Residues 108 to 116 (LGKGAYGNV) and lysine 131 each bind ATP. Aspartate 233 serves as the catalytic Proton acceptor. Residues asparagine 238 and aspartate 251 each contribute to the Mg(2+) site.

Belongs to the protein kinase superfamily. CMGC Ser/Thr protein kinase family. CDC2/CDKX subfamily. As to quaternary structure, interacts with cyd-1; the interaction is likely involved in regulating cdk-4 activity. Mg(2+) is required as a cofactor.

It catalyses the reaction L-seryl-[protein] + ATP = O-phospho-L-seryl-[protein] + ADP + H(+). The enzyme catalyses L-threonyl-[protein] + ATP = O-phospho-L-threonyl-[protein] + ADP + H(+). In terms of biological role, serine/threonine-protein kinase which, in association with cyclin D-like protein cyd-1, is required for the progression through the G1 phase of the cell cycle during postembryonic development by phosphorylating and inhibiting lin-35 and fzr-1. In complex with cyd-1, involved in sex determination during gonadogenesis by regulating the asymmetric division of the somatic gonadal precursor cell (SGP). The sequence is that of Cyclin-dependent kinase 4 homolog from Caenorhabditis elegans.